Here is a 232-residue protein sequence, read N- to C-terminus: 2,3,4,5-tetrahydropyridine-2,6-dicarboxylate N-acetyltransferase (232 aa).

Belongs to the transferase hexapeptide repeat family. DapH subfamily.

It carries out the reaction (S)-2,3,4,5-tetrahydrodipicolinate + acetyl-CoA + H2O = L-2-acetamido-6-oxoheptanedioate + CoA. The protein operates within amino-acid biosynthesis; L-lysine biosynthesis via DAP pathway; LL-2,6-diaminopimelate from (S)-tetrahydrodipicolinate (acetylase route): step 1/3. Its function is as follows. Catalyzes the transfer of an acetyl group from acetyl-CoA to tetrahydrodipicolinate. In Streptococcus thermophilus (strain CNRZ 1066), this protein is 2,3,4,5-tetrahydropyridine-2,6-dicarboxylate N-acetyltransferase.